Consider the following 494-residue polypeptide: Aspartyl/glutamyl-tRNA(Asn/Gln) amidotransferase subunit B (494 aa).

Belongs to the GatB/GatE family. GatB subfamily. In terms of assembly, heterotrimer of A, B and C subunits.

It carries out the reaction L-glutamyl-tRNA(Gln) + L-glutamine + ATP + H2O = L-glutaminyl-tRNA(Gln) + L-glutamate + ADP + phosphate + H(+). The catalysed reaction is L-aspartyl-tRNA(Asn) + L-glutamine + ATP + H2O = L-asparaginyl-tRNA(Asn) + L-glutamate + ADP + phosphate + 2 H(+). Allows the formation of correctly charged Asn-tRNA(Asn) or Gln-tRNA(Gln) through the transamidation of misacylated Asp-tRNA(Asn) or Glu-tRNA(Gln) in organisms which lack either or both of asparaginyl-tRNA or glutaminyl-tRNA synthetases. The reaction takes place in the presence of glutamine and ATP through an activated phospho-Asp-tRNA(Asn) or phospho-Glu-tRNA(Gln). In Rhodopseudomonas palustris (strain BisB18), this protein is Aspartyl/glutamyl-tRNA(Asn/Gln) amidotransferase subunit B.